A 330-amino-acid polypeptide reads, in one-letter code: Phenylalanine--tRNA ligase alpha subunit (330 aa).

Glu-246 provides a ligand contact to Mg(2+).

This sequence belongs to the class-II aminoacyl-tRNA synthetase family. Phe-tRNA synthetase alpha subunit type 1 subfamily. In terms of assembly, tetramer of two alpha and two beta subunits. Requires Mg(2+) as cofactor.

It localises to the cytoplasm. The catalysed reaction is tRNA(Phe) + L-phenylalanine + ATP = L-phenylalanyl-tRNA(Phe) + AMP + diphosphate + H(+). The sequence is that of Phenylalanine--tRNA ligase alpha subunit from Campylobacter jejuni subsp. jejuni serotype O:6 (strain 81116 / NCTC 11828).